Here is a 735-residue protein sequence, read N- to C-terminus: DNA replication licensing factor mcm5-A (735 aa).

The 207-residue stretch at 332-538 (IYETVAKSIA…RDMTLAKHVM (207 aa)) folds into the MCM domain. Position 372 (Arg372) interacts with ADP. The Arginine finger signature appears at 513–516 (SRFD).

The protein belongs to the MCM family. In terms of assembly, component of the mcm2-7 complex (RLF-M). The complex forms a toroidal hexameric ring with the proposed subunit order mcm2-mcm6-mcm4-mcm7-mcm3-mcm5. The heterodimer of mmcm3/mcm5 interacts with mcm4, mmcm6, mcm7 and weakly with mcm2. Component of the CMG helicase complex, composed of the mcm2-7 complex, the GINS complex and cdc45.

The protein resides in the nucleus. The protein localises to the chromosome. It catalyses the reaction ATP + H2O = ADP + phosphate + H(+). Its function is as follows. Acts as a component of the MCM2-7 complex (MCM complex) which is the replicative helicase essential for 'once per cell cycle' DNA replication initiation and elongation in eukaryotic cells. Core component of CDC45-MCM-GINS (CMG) helicase, the molecular machine that unwinds template DNA during replication, and around which the replisome is built. The active ATPase sites in the MCM2-7 ring are formed through the interaction surfaces of two neighboring subunits such that a critical structure of a conserved arginine finger motif is provided in trans relative to the ATP-binding site of the Walker A box of the adjacent subunit. The six ATPase active sites, however, are likely to contribute differentially to the complex helicase activity. This is DNA replication licensing factor mcm5-A (mcm5-a) from Xenopus laevis (African clawed frog).